The sequence spans 123 residues: Small ribosomal subunit protein uS11 (123 aa).

Residues 1–22 are disordered; the sequence is MAKKRKKKLSSPEGISHIHASA.

This sequence belongs to the universal ribosomal protein uS11 family. As to quaternary structure, part of the 30S ribosomal subunit. Interacts with proteins S7 and S18. Binds to IF-3.

Functionally, located on the platform of the 30S subunit, it bridges several disparate RNA helices of the 16S rRNA. Forms part of the Shine-Dalgarno cleft in the 70S ribosome. This chain is Small ribosomal subunit protein uS11, found in Malacoplasma penetrans (strain HF-2) (Mycoplasma penetrans).